Consider the following 215-residue polypeptide: MGKVYDWFEERLEIQAIADDITSKYVPPHVNIFYCIGGIVFTSFLIQVASGFAMTFYYRPTVAEAFSSVEYIMTDVNFGWLIRSIHRWSASMMVLMLILHMFRVYLTGGFKKPRELTWVTGVILAVLTVSFGVTGYSLPWDQIGYWAVKIVTGVPEAIPVVGGSIVELLRGGVSVGQSTLTRFYSLHTFVLPLLTAVFMLMHFLMIRKQGISGPL.

Residues 32–52 (IFYCIGGIVFTSFLIQVASGF) traverse the membrane as a helical segment. C35 provides a ligand contact to heme c. Positions 86 and 100 each coordinate heme b. 3 consecutive transmembrane segments (helical) span residues 90 to 110 (ASMMVLMLILHMFRVYLTGGF), 116 to 136 (LTWVTGVILAVLTVSFGVTGY), and 186 to 206 (LHTFVLPLLTAVFMLMHFLMI). Heme b-binding residues include H187 and H202.

This sequence belongs to the cytochrome b family. PetB subfamily. In terms of assembly, the 4 large subunits of the cytochrome b6-f complex are cytochrome b6, subunit IV (17 kDa polypeptide, PetD), cytochrome f and the Rieske protein, while the 4 small subunits are PetG, PetL, PetM and PetN. The complex functions as a dimer. Requires heme b as cofactor. It depends on heme c as a cofactor.

It localises to the plastid. The protein localises to the chloroplast thylakoid membrane. Functionally, component of the cytochrome b6-f complex, which mediates electron transfer between photosystem II (PSII) and photosystem I (PSI), cyclic electron flow around PSI, and state transitions. This Gracilaria tenuistipitata var. liui (Red alga) protein is Cytochrome b6.